We begin with the raw amino-acid sequence, 1171 residues long: 7,8-linoleate diol synthase (1171 aa).

A compositionally biased stretch (low complexity) spans 1 to 22; the sequence is MASSSSSGSSTRSSSPSDPPSS. Residues 1–56 form a disordered region; the sequence is MASSSSSGSSTRSSSPSDPPSSFFQKLGAFLGLFSKPQPPRPDYPHAPGNSAREEQ. The interval 114 to 457 is fatty acid alpha-dioxygenase; it reads TDGLITGLWE…DGSFEDEGLI (344 aa). Histidine 213 is a binding site for heme b. 5 residues coordinate Ca(2+): aspartate 214, serine 229, tyrosine 231, aspartate 233, and serine 235. Tyrosine 385 is an active-site residue. Residue histidine 388 participates in heme b binding. The epoxy alcohol synthase stretch occupies residues 675–1171; the sequence is KILNNQKDFK…PMNMKIRWDD (497 aa). The tract at residues 873 to 900 is disordered; the sequence is GLANGGANGHANGNANGHTNGNGIHQNG. Low complexity predominate over residues 881-895; sequence GHANGNANGHTNGNG. Cysteine 1089 provides a ligand contact to heme.

In the N-terminal section; belongs to the peroxidase family. The protein in the C-terminal section; belongs to the cytochrome P450 family. Homotetramer. The cofactor is heme b. Requires Ca(2+) as cofactor. Heme is required as a cofactor.

It carries out the reaction (9Z,12Z)-octadecadienoate + O2 = (8R,9Z,12Z)-8-hydroperoxyoctadeca-9,12-dienoate. The enzyme catalyses (8R,9Z,12Z)-8-hydroperoxyoctadeca-9,12-dienoate = (7S,8S,9Z,12Z)-7,8-dihydroxyoctadeca-9,12-dienoate. In terms of biological role, 7,8-linoleate diol synthase is a bifunctional enzyme that converts linoleic acid (18:2n-6) into 8-hydroperoxy-8(E),12(Z)-octadecadienoic acid (8-HPODE) and then catalyzes the isomerization of the resulting hydroperoxide to 7,8-dihydroxy-9(Z),12(Z)-octadecadienoic acid (7,8-DiHODE). In Pyricularia oryzae (strain 70-15 / ATCC MYA-4617 / FGSC 8958) (Rice blast fungus), this protein is 7,8-linoleate diol synthase.